The following is a 281-amino-acid chain: Bifunctional protein FolD (281 aa).

Residues 167–169 (GRS) and S192 each bind NADP(+).

Belongs to the tetrahydrofolate dehydrogenase/cyclohydrolase family. As to quaternary structure, homodimer.

It catalyses the reaction (6R)-5,10-methylene-5,6,7,8-tetrahydrofolate + NADP(+) = (6R)-5,10-methenyltetrahydrofolate + NADPH. It carries out the reaction (6R)-5,10-methenyltetrahydrofolate + H2O = (6R)-10-formyltetrahydrofolate + H(+). It functions in the pathway one-carbon metabolism; tetrahydrofolate interconversion. Its function is as follows. Catalyzes the oxidation of 5,10-methylenetetrahydrofolate to 5,10-methenyltetrahydrofolate and then the hydrolysis of 5,10-methenyltetrahydrofolate to 10-formyltetrahydrofolate. This chain is Bifunctional protein FolD, found in Alcanivorax borkumensis (strain ATCC 700651 / DSM 11573 / NCIMB 13689 / SK2).